The chain runs to 163 residues: NF-kappa-B inhibitor-interacting Ras-like protein 2 (163 aa).

Residues 1 to 163 (MGKSCKVVIC…SANWNLHPDH (163 aa)) are small GTPase-like. GTP is bound at residue 11–18 (GQHGVGKT). Residues 35–43 (MIETQEDIY) carry the Effector region motif. GTP contacts are provided by residues 61–65 (DTRGL) and 120–123 (NKSD).

The protein belongs to the small GTPase superfamily. Ras family. KappaB-Ras subfamily.

The protein localises to the cytoplasm. Atypical Ras-like protein that acts as a potent regulator of NF-kappa-B activity by preventing the degradation of NF-kappa-B inhibitor beta (NFKBIB) by most signals, explaining why NFKBIB is more resistant to degradation. The sequence is that of NF-kappa-B inhibitor-interacting Ras-like protein 2 (nkiras2) from Xenopus laevis (African clawed frog).